The primary structure comprises 54 residues: Large ribosomal subunit protein eL37 (54 aa).

Zn(2+) is bound by residues Cys20, Cys23, Cys35, and Cys38. The C4-type zinc finger occupies 20-38; sequence CRRCGHHTYNVRTKRCSHC.

The protein belongs to the eukaryotic ribosomal protein eL37 family. The cofactor is Zn(2+).

Its function is as follows. Binds to the 23S rRNA. This chain is Large ribosomal subunit protein eL37 (rpl37e), found in Thermoplasma acidophilum (strain ATCC 25905 / DSM 1728 / JCM 9062 / NBRC 15155 / AMRC-C165).